Here is a 335-residue protein sequence, read N- to C-terminus: RVS161-like protein RVS162 (335 aa).

The 294-residue stretch at 17–310 (VMLKTGHIEQ…LDAQTRQDYI (294 aa)) folds into the BAR domain. A coiled-coil region spans residues 30–56 (KEYEFQEKRYRTMEENSIKLQKNLRLY). The disordered stretch occupies residues 105–127 (HEEEGEEKEEEENDNTTTTTTTT). The span at 107-118 (EEGEEKEEEEND) shows a compositional bias: acidic residues. Residues 222 to 259 (TNIIELNHNQYEEKLKIYNQELTEVESKYVEINNQLLI) are a coiled coil.

It localises to the cytoplasm. It is found in the cytoskeleton. Its function is as follows. Component of a cytoskeletal structure that is required for membrane curvature. The chain is RVS161-like protein RVS162 from Candida albicans (strain SC5314 / ATCC MYA-2876) (Yeast).